Here is a 115-residue protein sequence, read N- to C-terminus: uncharacterized protein (115 aa).

The region spanning 1–115 (MGVEISLDPP…ETVIKLSAAE (115 aa)) is the MSP domain.

This is an uncharacterized protein from Caenorhabditis elegans.